A 221-amino-acid polypeptide reads, in one-letter code: Large ribosomal subunit protein uL3 (221 aa).

Belongs to the universal ribosomal protein uL3 family. Part of the 50S ribosomal subunit. Forms a cluster with proteins L14 and L19.

Functionally, one of the primary rRNA binding proteins, it binds directly near the 3'-end of the 23S rRNA, where it nucleates assembly of the 50S subunit. This is Large ribosomal subunit protein uL3 from Chlamydia muridarum (strain MoPn / Nigg).